The sequence spans 338 residues: Ketol-acid reductoisomerase (NADP(+)) (338 aa).

The KARI N-terminal Rossmann domain maps to 1 to 181 (MNVYYDKDCD…GGGRSGIIET (181 aa)). NADP(+) is bound by residues 24–27 (YGSQ), Arg47, Ser50, Ser52, and 82–85 (DEFQ). Residue His107 is part of the active site. Gly133 is a binding site for NADP(+). Residues 182 to 327 (TFKDETETDL…AKLRGMMPWI (146 aa)) enclose the KARI C-terminal knotted domain. Residues Asp190, Glu194, Glu226, and Glu230 each contribute to the Mg(2+) site. Ser251 is a binding site for substrate.

It belongs to the ketol-acid reductoisomerase family. The cofactor is Mg(2+).

The catalysed reaction is (2R)-2,3-dihydroxy-3-methylbutanoate + NADP(+) = (2S)-2-acetolactate + NADPH + H(+). The enzyme catalyses (2R,3R)-2,3-dihydroxy-3-methylpentanoate + NADP(+) = (S)-2-ethyl-2-hydroxy-3-oxobutanoate + NADPH + H(+). Its pathway is amino-acid biosynthesis; L-isoleucine biosynthesis; L-isoleucine from 2-oxobutanoate: step 2/4. It participates in amino-acid biosynthesis; L-valine biosynthesis; L-valine from pyruvate: step 2/4. Involved in the biosynthesis of branched-chain amino acids (BCAA). Catalyzes an alkyl-migration followed by a ketol-acid reduction of (S)-2-acetolactate (S2AL) to yield (R)-2,3-dihydroxy-isovalerate. In the isomerase reaction, S2AL is rearranged via a Mg-dependent methyl migration to produce 3-hydroxy-3-methyl-2-ketobutyrate (HMKB). In the reductase reaction, this 2-ketoacid undergoes a metal-dependent reduction by NADPH to yield (R)-2,3-dihydroxy-isovalerate. This chain is Ketol-acid reductoisomerase (NADP(+)), found in Psychrobacter cryohalolentis (strain ATCC BAA-1226 / DSM 17306 / VKM B-2378 / K5).